The primary structure comprises 90 residues: Protein LIM1 (90 aa).

The signal sequence occupies residues 1 to 26 (MASMKSLATAILVVLLLAALSREGRS). 4 cysteine pairs are disulfide-bonded: Cys29–Cys66, Cys39–Cys55, Cys56–Cys81, and Cys68–Cys88.

The protein belongs to the A9/FIL1 family.

Its subcellular location is the secreted. The sequence is that of Protein LIM1 (LIM1) from Lilium longiflorum (Trumpet lily).